We begin with the raw amino-acid sequence, 241 residues long: Chalcone--flavanone isomerase C (241 aa).

Residues threonine 50, asparagine 115, and serine 192 each contribute to the substrate site.

This sequence belongs to the chalcone isomerase family.

It catalyses the reaction a chalcone = a flavanone.. It participates in secondary metabolite biosynthesis; flavonoid biosynthesis. Its function is as follows. Catalyzes the intramolecular cyclization of bicyclic chalcones into tricyclic (S)-flavanones. Responsible for the isomerization of 4,2',4',6'-tetrahydroxychalcone (also termed chalcone) into naringenin. The polypeptide is Chalcone--flavanone isomerase C (CHI3) (Petunia hybrida (Petunia)).